A 391-amino-acid chain; its full sequence is NADH-quinone oxidoreductase subunit D (391 aa).

Belongs to the complex I 49 kDa subunit family. As to quaternary structure, NDH-1 is composed of 14 different subunits. Subunits NuoB, C, D, E, F, and G constitute the peripheral sector of the complex.

The protein localises to the cell inner membrane. The enzyme catalyses a quinone + NADH + 5 H(+)(in) = a quinol + NAD(+) + 4 H(+)(out). In terms of biological role, NDH-1 shuttles electrons from NADH, via FMN and iron-sulfur (Fe-S) centers, to quinones in the respiratory chain. The immediate electron acceptor for the enzyme in this species is believed to be ubiquinone. Couples the redox reaction to proton translocation (for every two electrons transferred, four hydrogen ions are translocated across the cytoplasmic membrane), and thus conserves the redox energy in a proton gradient. The sequence is that of NADH-quinone oxidoreductase subunit D from Rickettsia rickettsii (strain Iowa).